We begin with the raw amino-acid sequence, 338 residues long: Holliday junction branch migration complex subunit RuvB (338 aa).

Positions 1 to 181 are large ATPase domain (RuvB-L); it reads MTRTITPSIT…FGVISRLEFY (181 aa). ATP-binding positions include L20, R21, G62, K65, T66, T67, 128–130, R171, Y181, and R218; that span reads EDF. T66 contacts Mg(2+). The small ATPAse domain (RuvB-S) stretch occupies residues 182 to 252; the sequence is TDEELAFIIT…VVQDALALLE (71 aa). The segment at 255-338 is head domain (RuvB-H); sequence EMGFDQMDRM…VPEPPQGKLF (84 aa). DNA is bound by residues R310 and R315.

The protein belongs to the RuvB family. As to quaternary structure, homohexamer. Forms an RuvA(8)-RuvB(12)-Holliday junction (HJ) complex. HJ DNA is sandwiched between 2 RuvA tetramers; dsDNA enters through RuvA and exits via RuvB. An RuvB hexamer assembles on each DNA strand where it exits the tetramer. Each RuvB hexamer is contacted by two RuvA subunits (via domain III) on 2 adjacent RuvB subunits; this complex drives branch migration. In the full resolvosome a probable DNA-RuvA(4)-RuvB(12)-RuvC(2) complex forms which resolves the HJ.

The protein resides in the cytoplasm. It catalyses the reaction ATP + H2O = ADP + phosphate + H(+). Its function is as follows. The RuvA-RuvB-RuvC complex processes Holliday junction (HJ) DNA during genetic recombination and DNA repair, while the RuvA-RuvB complex plays an important role in the rescue of blocked DNA replication forks via replication fork reversal (RFR). RuvA specifically binds to HJ cruciform DNA, conferring on it an open structure. The RuvB hexamer acts as an ATP-dependent pump, pulling dsDNA into and through the RuvAB complex. RuvB forms 2 homohexamers on either side of HJ DNA bound by 1 or 2 RuvA tetramers; 4 subunits per hexamer contact DNA at a time. Coordinated motions by a converter formed by DNA-disengaged RuvB subunits stimulates ATP hydrolysis and nucleotide exchange. Immobilization of the converter enables RuvB to convert the ATP-contained energy into a lever motion, pulling 2 nucleotides of DNA out of the RuvA tetramer per ATP hydrolyzed, thus driving DNA branch migration. The RuvB motors rotate together with the DNA substrate, which together with the progressing nucleotide cycle form the mechanistic basis for DNA recombination by continuous HJ branch migration. Branch migration allows RuvC to scan DNA until it finds its consensus sequence, where it cleaves and resolves cruciform DNA. This Geotalea uraniireducens (strain Rf4) (Geobacter uraniireducens) protein is Holliday junction branch migration complex subunit RuvB.